We begin with the raw amino-acid sequence, 432 residues long: Enolase (432 aa).

Glutamine 167 serves as a coordination point for (2R)-2-phosphoglycerate. Glutamate 209 functions as the Proton donor in the catalytic mechanism. The Mg(2+) site is built by aspartate 246, glutamate 290, and aspartate 317. Residues lysine 342, arginine 371, serine 372, and lysine 393 each coordinate (2R)-2-phosphoglycerate. Catalysis depends on lysine 342, which acts as the Proton acceptor.

This sequence belongs to the enolase family. In terms of assembly, component of the RNA degradosome, a multiprotein complex involved in RNA processing and mRNA degradation. The cofactor is Mg(2+).

Its subcellular location is the cytoplasm. The protein localises to the secreted. The protein resides in the cell surface. The enzyme catalyses (2R)-2-phosphoglycerate = phosphoenolpyruvate + H2O. It functions in the pathway carbohydrate degradation; glycolysis; pyruvate from D-glyceraldehyde 3-phosphate: step 4/5. In terms of biological role, catalyzes the reversible conversion of 2-phosphoglycerate (2-PG) into phosphoenolpyruvate (PEP). It is essential for the degradation of carbohydrates via glycolysis. The chain is Enolase from Escherichia coli O139:H28 (strain E24377A / ETEC).